Here is a 437-residue protein sequence, read N- to C-terminus: Phosphoribosylamine--glycine ligase (437 aa).

Residues lysine 109–asparagine 316 form the ATP-grasp domain. Residue valine 135–serine 196 participates in ATP binding. Residues glutamate 286 and asparagine 288 each coordinate Mg(2+).

This sequence belongs to the GARS family. Mg(2+) is required as a cofactor. The cofactor is Mn(2+).

It carries out the reaction 5-phospho-beta-D-ribosylamine + glycine + ATP = N(1)-(5-phospho-beta-D-ribosyl)glycinamide + ADP + phosphate + H(+). It functions in the pathway purine metabolism; IMP biosynthesis via de novo pathway; N(1)-(5-phospho-D-ribosyl)glycinamide from 5-phospho-alpha-D-ribose 1-diphosphate: step 2/2. This is Phosphoribosylamine--glycine ligase from Xylella fastidiosa (strain 9a5c).